The chain runs to 105 residues: DNA-directed RNA polymerases I and III subunit RPAC2 (105 aa).

The protein belongs to the archaeal Rpo11/eukaryotic RPB11/RPC19 RNA polymerase subunit family. Component of the RNA polymerase I (Pol I) and RNA polymerase III (Pol III) complexes consisting of at least 13 and 17 subunits, respectively.

It localises to the nucleus. Its function is as follows. DNA-dependent RNA polymerase catalyzes the transcription of DNA into RNA using the four ribonucleoside triphosphates as substrates. Common core component of RNA polymerases I and III which synthesize ribosomal RNA precursors and small RNAs, such as 5S rRNA and tRNAs, respectively. The protein is DNA-directed RNA polymerases I and III subunit RPAC2 of Drosophila melanogaster (Fruit fly).